We begin with the raw amino-acid sequence, 125 residues long: Conopressin-conophysin, isoform 1 (125 aa).

An N-terminal signal peptide occupies residues 1–22; that stretch reads MQMGRPTLLPCLLLLLVLSTQA. Cysteines 23 and 28 form a disulfide. A Glycine amide modification is found at Gly31. Positions 32–39 are excised as a propeptide; that stretch reads GKRDVHMI. 7 disulfides stabilise this stretch: Cys45–Cys85, Cys48–Cys59, Cys53–Cys75, Cys60–Cys65, Cys92–Cys112, Cys104–Cys124, and Cys113–Cys118.

Belongs to the vasopressin/oxytocin family. As to expression, expressed by the venom gland.

It is found in the secreted. In terms of biological role, targets vasopressin-oxytocin related receptors. This chain is Conopressin-conophysin, isoform 1, found in Conus monile (Necklace cone).